Reading from the N-terminus, the 1138-residue chain is Condensin-2 complex subunit G2 (1138 aa).

A Phosphoserine modification is found at Ser30. An HEAT repeat occupies 459–497 (LLPTLRYSLHDNSEKVRVAFVDLLLKIKAVRAAKFWKIC). Residue Thr1114 is modified to Phosphothreonine.

In terms of assembly, component of the condensin-2 complex, which contains the SMC2 and SMC4 heterodimer, and 3 non SMC subunits that probably regulate the complex: NCAPH2, NCAPD3 and NCAPG2. As to expression, expressed in spleen, lung and testis as well as in hematopoietic cell lines.

It localises to the nucleus. Regulatory subunit of the condensin-2 complex, a complex which establishes mitotic chromosome architecture and is involved in physical rigidity of the chromatid axis. Is required for early embryonic development and is essential for viability and expansion of the inner cell mass (ICM) of the implanting blastocyst. This is Condensin-2 complex subunit G2 (Ncapg2) from Mus musculus (Mouse).